A 208-amino-acid polypeptide reads, in one-letter code: Large ribosomal subunit protein bL25 (208 aa).

Belongs to the bacterial ribosomal protein bL25 family. CTC subfamily. In terms of assembly, part of the 50S ribosomal subunit; part of the 5S rRNA/L5/L18/L25 subcomplex. Contacts the 5S rRNA. Binds to the 5S rRNA independently of L5 and L18.

In terms of biological role, this is one of the proteins that binds to the 5S RNA in the ribosome where it forms part of the central protuberance. The chain is Large ribosomal subunit protein bL25 from Leptothrix cholodnii (strain ATCC 51168 / LMG 8142 / SP-6) (Leptothrix discophora (strain SP-6)).